An 816-amino-acid chain; its full sequence is Bifunctional aspartokinase/homoserine dehydrogenase (816 aa).

The tract at residues 1-250 (MKLLKFGGTS…VPNARLLKSI (250 aa)) is aspartokinase. Residues 251-471 (SYQEAMELSY…FNKKTIHMFL (221 aa)) form an interface region. An ACT domain is found at 402-479 (IVGSNIYKKH…FLIGIGGIGS (78 aa)). Residues 472–816 (IGIGGIGSTL…VFSDLLRTLS (345 aa)) form a homoserine dehydrogenase region. Residues G476, I477, and A505 each coordinate NAD(+). I477 is an NADP(+) binding site. I477 is a binding site for NADPH. NADP(+) contacts are provided by K508 and T556. T556 is a binding site for NAD(+). T556, S557, S578, and K580 together coordinate NADPH. Residues S578 and K580 each coordinate NADP(+). Residues E607, V610, A612, and L614 each contribute to the Na(+) site. NADP(+) contacts are provided by G665 and E668. The L-homoserine site is built by E668 and D679. Residue K683 is the Proton donor of the active site. G799 lines the NAD(+) pocket. Position 799 (G799) interacts with NADP(+). G799 lines the NADPH pocket.

It in the N-terminal section; belongs to the aspartokinase family. In the C-terminal section; belongs to the homoserine dehydrogenase family. As to quaternary structure, homotetramer. It depends on a metal cation as a cofactor.

It carries out the reaction L-homoserine + NADP(+) = L-aspartate 4-semialdehyde + NADPH + H(+). The catalysed reaction is L-homoserine + NAD(+) = L-aspartate 4-semialdehyde + NADH + H(+). It catalyses the reaction L-aspartate + ATP = 4-phospho-L-aspartate + ADP. Its pathway is amino-acid biosynthesis; L-lysine biosynthesis via DAP pathway; (S)-tetrahydrodipicolinate from L-aspartate: step 1/4. It participates in amino-acid biosynthesis; L-methionine biosynthesis via de novo pathway; L-homoserine from L-aspartate: step 1/3. The protein operates within amino-acid biosynthesis; L-methionine biosynthesis via de novo pathway; L-homoserine from L-aspartate: step 3/3. It functions in the pathway amino-acid biosynthesis; L-threonine biosynthesis; L-threonine from L-aspartate: step 1/5. Its pathway is amino-acid biosynthesis; L-threonine biosynthesis; L-threonine from L-aspartate: step 3/5. Its function is as follows. Bifunctional aspartate kinase and homoserine dehydrogenase that catalyzes the first and the third steps toward the synthesis of lysine, methionine and threonine from aspartate. The polypeptide is Bifunctional aspartokinase/homoserine dehydrogenase (thrA) (Buchnera aphidicola subsp. Acyrthosiphon pisum (strain APS) (Acyrthosiphon pisum symbiotic bacterium)).